Consider the following 528-residue polypeptide: MSWRLSFRTNLLIYNVRRRNYATKAAGKPATRPNRWKSVIGLEVHAQIQTNSKLFSGAEVAFSSPINSCVSLFDASIPGTLPVLNRKCVELGVRTALALGCKVNSVSMFDRKHYFYADLPAGYQITQQRAPLARGGLLSFPVFVPGVSRKPYYKSARLHQLQLEQDSGKSLHDPVERKSLVDLNRAGVPLMELVFEPDLETGEEAAALVKELILILTRLGSCSCRMEEGALRVDANISVHKENTPLGTRTEVKNIGSVRAVAQAIEFEIERQIGILDGGGKIFNETRAWDAAGRQTIAMRDKEVVQDYRFMPEPNLPPLHVNVDGECDADVVVDAVHIGSSLPELPEETRRQIVEIHNLTPEMAIILVNDITLYNHFRTILDEPGKARSPKAVANFLINELLTILNKNKIDIEECRIPSTHLAEVTDMLEGNIINAYLARLIVQEALDGEGRESPALLAQRNDWLMITDTERIEAMCKDAIKNNPKVVEKYRKGKEKMLYALAGEIAKVSEQKVDMAKSVDLLKNMLK.

The transit peptide at M1–Y21 directs the protein to the mitochondrion.

Belongs to the GatB/GatE family. GatB subfamily. As to quaternary structure, subunit of the heterotrimeric GatCAB amidotransferase (AdT) complex, composed of A, B and C subunits.

The protein localises to the mitochondrion. It catalyses the reaction L-glutamyl-tRNA(Gln) + L-glutamine + ATP + H2O = L-glutaminyl-tRNA(Gln) + L-glutamate + ADP + phosphate + H(+). Allows the formation of correctly charged Gln-tRNA(Gln) through the transamidation of misacylated Glu-tRNA(Gln) in the mitochondria. The reaction takes place in the presence of glutamine and ATP through an activated gamma-phospho-Glu-tRNA(Gln). The sequence is that of Glutamyl-tRNA(Gln) amidotransferase subunit B, mitochondrial from Aedes aegypti (Yellowfever mosquito).